The primary structure comprises 196 residues: Peptidyl-tRNA hydrolase (196 aa).

Tyr-17 contributes to the tRNA binding site. The active-site Proton acceptor is His-22. Residues Phe-68, Asn-70, and Asn-116 each contribute to the tRNA site.

Belongs to the PTH family. As to quaternary structure, monomer.

The protein localises to the cytoplasm. It catalyses the reaction an N-acyl-L-alpha-aminoacyl-tRNA + H2O = an N-acyl-L-amino acid + a tRNA + H(+). Functionally, hydrolyzes ribosome-free peptidyl-tRNAs (with 1 or more amino acids incorporated), which drop off the ribosome during protein synthesis, or as a result of ribosome stalling. Catalyzes the release of premature peptidyl moieties from peptidyl-tRNA molecules trapped in stalled 50S ribosomal subunits, and thus maintains levels of free tRNAs and 50S ribosomes. In Serratia proteamaculans (strain 568), this protein is Peptidyl-tRNA hydrolase.